Reading from the N-terminus, the 158-residue chain is Interleukin-36 alpha (158 aa).

The propeptide occupies 1 to 5 (MEKAL). Tyr-96 is modified (3'-nitrotyrosine).

This sequence belongs to the IL-1 family. Interacts with TMED10; the interaction mediates the translocation from the cytoplasm into the ERGIC (endoplasmic reticulum-Golgi intermediate compartment) and thereby secretion. In terms of processing, N-terminal truncation leads to a dramatic enhancement of its activity (&gt;1000-fold). In terms of tissue distribution, expressed in immune system and fetal brain, but not in other tissues tested or in multiple hematopoietic cell lines. Predominantly expressed in skin keratinocytes but not in fibroblasts, endothelial cells or melanocytes. Increased in lesional psoriasis skin.

Its subcellular location is the cytoplasm. It is found in the secreted. Functionally, cytokine that binds to and signals through the IL1RL2/IL-36R receptor which in turn activates NF-kappa-B and MAPK signaling pathways in target cells linked to a pro-inflammatory response. Part of the IL-36 signaling system that is thought to be present in epithelial barriers and to take part in local inflammatory response; similar to the IL-1 system with which it shares the coreceptor IL1RAP. Seems to be involved in skin inflammatory response by acting on keratinocytes, dendritic cells and indirectly on T-cells to drive tissue infiltration, cell maturation and cell proliferation. In cultured keratinocytes induces the expression of macrophage, T-cell, and neutrophil chemokines, such as CCL3, CCL4, CCL5, CCL2, CCL17, CCL22, CL20, CCL5, CCL2, CCL17, CCL22, CXCL8, CCL20 and CXCL1, and the production of pro-inflammatory cytokines such as TNF-alpha, IL-8 and IL-6. In cultured monocytes up-regulates expression of IL-1A, IL-1B and IL-6. In myeloid dendritic cells involved in cell maturation by up-regulating surface expression of CD83, CD86 and HLA-DR. In monocyte-derived dendritic cells facilitates dendritic cell maturation and drives T-cell proliferation. May play a role in pro-inflammatory effects in the lung. This is Interleukin-36 alpha from Homo sapiens (Human).